Reading from the N-terminus, the 438-residue chain is UDP-N-acetylmuramoylalanine--D-glutamate ligase (438 aa).

112–118 contacts ATP; the sequence is GSNGKST.

The protein belongs to the MurCDEF family.

The protein resides in the cytoplasm. The enzyme catalyses UDP-N-acetyl-alpha-D-muramoyl-L-alanine + D-glutamate + ATP = UDP-N-acetyl-alpha-D-muramoyl-L-alanyl-D-glutamate + ADP + phosphate + H(+). It functions in the pathway cell wall biogenesis; peptidoglycan biosynthesis. Its function is as follows. Cell wall formation. Catalyzes the addition of glutamate to the nucleotide precursor UDP-N-acetylmuramoyl-L-alanine (UMA). The sequence is that of UDP-N-acetylmuramoylalanine--D-glutamate ligase from Shigella sonnei (strain Ss046).